Reading from the N-terminus, the 225-residue chain is Octanoyltransferase (225 aa).

A BPL/LPL catalytic domain is found at 44–219 (RETPDEIWLL…NFIAQLTHRI (176 aa)). Substrate is bound by residues 83–90 (RGGQITYH), 150–152 (SLG), and 163–165 (GIA). The active-site Acyl-thioester intermediate is Cys181.

This sequence belongs to the LipB family.

It localises to the cytoplasm. It carries out the reaction octanoyl-[ACP] + L-lysyl-[protein] = N(6)-octanoyl-L-lysyl-[protein] + holo-[ACP] + H(+). The protein operates within protein modification; protein lipoylation via endogenous pathway; protein N(6)-(lipoyl)lysine from octanoyl-[acyl-carrier-protein]: step 1/2. In terms of biological role, catalyzes the transfer of endogenously produced octanoic acid from octanoyl-acyl-carrier-protein onto the lipoyl domains of lipoate-dependent enzymes. Lipoyl-ACP can also act as a substrate although octanoyl-ACP is likely to be the physiological substrate. This Nitrosomonas eutropha (strain DSM 101675 / C91 / Nm57) protein is Octanoyltransferase.